The sequence spans 275 residues: NH(3)-dependent NAD(+) synthetase (275 aa).

Residue 50–57 (GISGGVDS) participates in ATP binding. Aspartate 56 is a binding site for Mg(2+). Arginine 147 serves as a coordination point for deamido-NAD(+). Threonine 167 lines the ATP pocket. Mg(2+) is bound at residue glutamate 172. 2 residues coordinate deamido-NAD(+): lysine 180 and aspartate 187. Positions 196 and 218 each coordinate ATP. A deamido-NAD(+)-binding site is contributed by 267–268 (HK).

This sequence belongs to the NAD synthetase family. In terms of assembly, homodimer.

The catalysed reaction is deamido-NAD(+) + NH4(+) + ATP = AMP + diphosphate + NAD(+) + H(+). The protein operates within cofactor biosynthesis; NAD(+) biosynthesis; NAD(+) from deamido-NAD(+) (ammonia route): step 1/1. In terms of biological role, catalyzes the ATP-dependent amidation of deamido-NAD to form NAD. Uses ammonia as a nitrogen source. This chain is NH(3)-dependent NAD(+) synthetase, found in Pseudomonas syringae pv. syringae (strain B728a).